A 697-amino-acid polypeptide reads, in one-letter code: Phosphoribosylformylglycinamidine synthase subunit PurL (697 aa).

Residue H34 is part of the active site. Residues Y37 and K76 each contribute to the ATP site. Position 78 (E78) interacts with Mg(2+). Residues S79–H82 and R101 each bind substrate. The Proton acceptor role is filled by H80. D102 serves as a coordination point for Mg(2+). A substrate-binding site is contributed by Q224. D250 provides a ligand contact to Mg(2+). E294 to Q296 provides a ligand contact to substrate. Positions 472 and 509 each coordinate ATP. Residue S512 participates in substrate binding.

The protein belongs to the FGAMS family. In terms of assembly, monomer. Part of the FGAM synthase complex composed of 1 PurL, 1 PurQ and 2 PurS subunits.

It localises to the cytoplasm. It carries out the reaction N(2)-formyl-N(1)-(5-phospho-beta-D-ribosyl)glycinamide + L-glutamine + ATP + H2O = 2-formamido-N(1)-(5-O-phospho-beta-D-ribosyl)acetamidine + L-glutamate + ADP + phosphate + H(+). It functions in the pathway purine metabolism; IMP biosynthesis via de novo pathway; 5-amino-1-(5-phospho-D-ribosyl)imidazole from N(2)-formyl-N(1)-(5-phospho-D-ribosyl)glycinamide: step 1/2. Its function is as follows. Part of the phosphoribosylformylglycinamidine synthase complex involved in the purines biosynthetic pathway. Catalyzes the ATP-dependent conversion of formylglycinamide ribonucleotide (FGAR) and glutamine to yield formylglycinamidine ribonucleotide (FGAM) and glutamate. The FGAM synthase complex is composed of three subunits. PurQ produces an ammonia molecule by converting glutamine to glutamate. PurL transfers the ammonia molecule to FGAR to form FGAM in an ATP-dependent manner. PurS interacts with PurQ and PurL and is thought to assist in the transfer of the ammonia molecule from PurQ to PurL. The protein is Phosphoribosylformylglycinamidine synthase subunit PurL of Pyrobaculum aerophilum (strain ATCC 51768 / DSM 7523 / JCM 9630 / CIP 104966 / NBRC 100827 / IM2).